We begin with the raw amino-acid sequence, 493 residues long: Cyclin-dependent kinase-like 2 (493 aa).

The Protein kinase domain occupies Tyr4–Phe287. Residues Val10 to Val18 and Lys33 contribute to the ATP site. The [NKR]KIAxRE motif lies at Lys45–Glu51. The active-site Proton acceptor is Asp126. Residues Gly363 to Ser384 are disordered.

This sequence belongs to the protein kinase superfamily. CMGC Ser/Thr protein kinase family. CDC2/CDKX subfamily. As to expression, expressed in testis and kidney, and at lower level in brain and lung.

Its subcellular location is the cytoplasm. The protein localises to the nucleus. It catalyses the reaction L-seryl-[protein] + ATP = O-phospho-L-seryl-[protein] + ADP + H(+). The catalysed reaction is L-threonyl-[protein] + ATP = O-phospho-L-threonyl-[protein] + ADP + H(+). In Homo sapiens (Human), this protein is Cyclin-dependent kinase-like 2.